Reading from the N-terminus, the 425-residue chain is MSVLIIDGGIPLKGKVTAQGCKNSALAILAAAALCEDRVYLTNVPDIGDVKTMMSILRSLGYKVTWGSGLTIKPGVIKNYDLTHTGAGSIRGSLLFLGALLGRLGKVVLPMPGGCNIGTRPIDLHLKGLSLMGASLDIQGGNIVGEAPSGLKGAYVYLDFPSVGATENIMIAGALASGETTIENAAQDQQVVELGKFLMACGVKIHGLGTKVIRIKGKKEIGGVTFRISGDSIEAGTYAIAAAATRGSITVDGVDVTFLRPLLFKLQEAGIEVVVTNGHEVTVLPSPRPKGITIKTMPFPGFPTDLQPLMMSLLATAEGRSVITETVYDGRMGHVSELWKMGANIEVEGNTAIITGVEKLTGAPVVANNLRAGAALVVAGLSAEGRSVVYGMEHVMRGYSNIHQKLRALDAKVELVSDEEAVNIA.

22–23 contributes to the phosphoenolpyruvate binding site; it reads KN. R91 provides a ligand contact to UDP-N-acetyl-alpha-D-glucosamine. C115 acts as the Proton donor in catalysis. The residue at position 115 (C115) is a 2-(S-cysteinyl)pyruvic acid O-phosphothioketal. UDP-N-acetyl-alpha-D-glucosamine contacts are provided by residues 120 to 124, D305, and V327; that span reads RPIDL.

Belongs to the EPSP synthase family. MurA subfamily.

The protein resides in the cytoplasm. It carries out the reaction phosphoenolpyruvate + UDP-N-acetyl-alpha-D-glucosamine = UDP-N-acetyl-3-O-(1-carboxyvinyl)-alpha-D-glucosamine + phosphate. Its pathway is cell wall biogenesis; peptidoglycan biosynthesis. Functionally, cell wall formation. Adds enolpyruvyl to UDP-N-acetylglucosamine. This Coprothermobacter proteolyticus (strain ATCC 35245 / DSM 5265 / OCM 4 / BT) protein is UDP-N-acetylglucosamine 1-carboxyvinyltransferase.